The sequence spans 347 residues: Probable replication factor C subunit 3 (347 aa).

This sequence belongs to the activator 1 small subunits family. Heteropentamer of various rfc subunits that forms a complex (RFC) with PCNA in the presence of ATP.

The protein resides in the nucleus. The elongation of primed DNA templates by DNA polymerase delta and epsilon requires the action of the accessory proteins PCNA and activator 1. The protein is Probable replication factor C subunit 3 (rfc3) of Dictyostelium discoideum (Social amoeba).